Reading from the N-terminus, the 80-residue chain is Sec-independent protein translocase protein TatA (80 aa).

Residues 1 to 21 form a helical membrane-spanning segment; it reads MGQIGIWQILIIALVILVLFG. Residues 38–80 form a disordered region; sequence SFKKGLNEEDKPAEPAAKIEGPSHEAKPAGEAAKDPRPADKQG. The span at 58-80 shows a compositional bias: basic and acidic residues; sequence GPSHEAKPAGEAAKDPRPADKQG.

Belongs to the TatA/E family. As to quaternary structure, the Tat system comprises two distinct complexes: a TatABC complex, containing multiple copies of TatA, TatB and TatC subunits, and a separate TatA complex, containing only TatA subunits. Substrates initially bind to the TatABC complex, which probably triggers association of the separate TatA complex to form the active translocon.

The protein resides in the cell inner membrane. In terms of biological role, part of the twin-arginine translocation (Tat) system that transports large folded proteins containing a characteristic twin-arginine motif in their signal peptide across membranes. TatA could form the protein-conducting channel of the Tat system. The protein is Sec-independent protein translocase protein TatA of Erythrobacter litoralis (strain HTCC2594).